The following is a 500-amino-acid chain: Lysine--tRNA ligase (500 aa).

Residues Glu-411 and Glu-418 each coordinate Mg(2+).

Belongs to the class-II aminoacyl-tRNA synthetase family. In terms of assembly, homodimer. Mg(2+) is required as a cofactor.

The protein localises to the cytoplasm. The enzyme catalyses tRNA(Lys) + L-lysine + ATP = L-lysyl-tRNA(Lys) + AMP + diphosphate. The chain is Lysine--tRNA ligase from Actinobacillus pleuropneumoniae serotype 5b (strain L20).